The primary structure comprises 238 residues: N-methyltransferase vrtF (238 aa).

Belongs to the methyltransferase superfamily.

The protein operates within secondary metabolite biosynthesis; terpenoid biosynthesis. Its function is as follows. N-methyltransferase; part of the gene cluster that mediates the biosynthesis of viridicatumtoxin, a tetracycline-like fungal meroterpenoid with a unique, fused spirobicyclic ring system. The first step of the pathway is the production of the malonamoyl-CoA starter unit for the polyketide synthase vrtA. The aldolase vrtJ may be involved in the synthesis of the malonamate substrate for malonamoyl-CoA synthetase vrtB. The polyketide synthase vrtA then may utilize the malonamoyl-CoA starter unit, followed by sequential condensation of eight malonyl-CoA units to form the polyketide backbone. The cyclization of the last ring could be mediated by the lactamase-like protein vrtG. The proposed post-PKS tailoring steps are a hydroxylation at C5 catalyzed the cytochrome P450 monooxygenase vrtE, a hydroxylation at C12a catalyzed by VrtH and/or VrtI, and an O-methylation by the O-methyltransferase vrtF. VrtC is then proposed to catalyze the transfer of a geranyl group synthesized by vrtD to the aromatic C ring of the tetracyclic polyketide intermediate of viridicatumtoxin to yield previridicatumtoxin. Finally, the cytochrome P450 monooxygenase vrtK catalyzes the spirocyclization of the geranyl moiety of previridicatumtoxin to afford viridicatumtoxin. The protein is N-methyltransferase vrtF of Penicillium aethiopicum.